Consider the following 495-residue polypeptide: NADP/NAD-dependent aldehyde dehydrogenase PuuC (495 aa).

244-249 (GSTRTG) contributes to the NAD(+) binding site. Residues Glu-267 and Cys-302 contribute to the active site.

Belongs to the aldehyde dehydrogenase family.

It catalyses the reaction an aldehyde + NADP(+) + H2O = a carboxylate + NADPH + 2 H(+). The catalysed reaction is an aldehyde + NAD(+) + H2O = a carboxylate + NADH + 2 H(+). The enzyme catalyses 4-(gamma-L-glutamylamino)butanal + NADP(+) + H2O = 4-(gamma-L-glutamylamino)butanoate + NADPH + 2 H(+). It carries out the reaction 4-(gamma-L-glutamylamino)butanal + NAD(+) + H2O = 4-(gamma-L-glutamylamino)butanoate + NADH + 2 H(+). The protein operates within amine and polyamine degradation; putrescine degradation; 4-aminobutanoate from putrescine: step 3/4. With respect to regulation, lithium ions exhibits the highest inhibition (97%). To a lesser extent (5-20%), potassium, sodium, and ammonium ions also inhibit PuuC activity. Transition metals, such as copper and zinc ions inhibit PuuC activity by more than 90%. The presence of heavy metals (mercury, silver) or sodium hydrogensulfite in the reaction mixture completely inactivate PuuC; in contrast, disulfide reductants such as DTT and 2-mercaptoethanol significantly increase its activity by 75% and 27%, respectively. Its function is as follows. Catalyzes the oxidation of 3-hydroxypropionaldehyde (3-HPA) to 3-hydroxypropionic acid (3-HP). It acts preferentially with NAD but can also use NADP. 3-HPA appears to be the most suitable substrate for PuuC followed by isovaleraldehyde, propionaldehyde, butyraldehyde, and valeraldehyde. It might play a role in propionate and/or acetic acid metabolisms. Also involved in the breakdown of putrescine through the oxidation of gamma-Glu-gamma-aminobutyraldehyde to gamma-Glu-gamma-aminobutyrate (gamma-Glu-GABA). This Escherichia coli (strain K12) protein is NADP/NAD-dependent aldehyde dehydrogenase PuuC.